Here is a 422-residue protein sequence, read N- to C-terminus: 4-hydroxy-3-methylbut-2-en-1-yl diphosphate synthase (flavodoxin) (422 aa).

[4Fe-4S] cluster-binding residues include Cys316, Cys319, Cys362, and Glu369.

The protein belongs to the IspG family. [4Fe-4S] cluster is required as a cofactor.

It carries out the reaction (2E)-4-hydroxy-3-methylbut-2-enyl diphosphate + oxidized [flavodoxin] + H2O + 2 H(+) = 2-C-methyl-D-erythritol 2,4-cyclic diphosphate + reduced [flavodoxin]. The protein operates within isoprenoid biosynthesis; isopentenyl diphosphate biosynthesis via DXP pathway; isopentenyl diphosphate from 1-deoxy-D-xylulose 5-phosphate: step 5/6. In terms of biological role, converts 2C-methyl-D-erythritol 2,4-cyclodiphosphate (ME-2,4cPP) into 1-hydroxy-2-methyl-2-(E)-butenyl 4-diphosphate. The chain is 4-hydroxy-3-methylbut-2-en-1-yl diphosphate synthase (flavodoxin) from Anaplasma marginale (strain St. Maries).